A 911-amino-acid polypeptide reads, in one-letter code: Pesticidal crystal protein Cry1Af (911 aa).

It belongs to the delta endotoxin family.

Promotes colloidosmotic lysis by binding to the midgut epithelial cells of both dipteran and lepidopteran larvae. The polypeptide is Pesticidal crystal protein Cry1Af (cry1Af) (Bacillus thuringiensis).